A 432-amino-acid polypeptide reads, in one-letter code: Enolase (432 aa).

Gln-166 lines the (2R)-2-phosphoglycerate pocket. Catalysis depends on Glu-208, which acts as the Proton donor. 3 residues coordinate Mg(2+): Asp-245, Glu-291, and Asp-318. 4 residues coordinate (2R)-2-phosphoglycerate: Lys-343, Arg-372, Ser-373, and Lys-394. Lys-343 (proton acceptor) is an active-site residue.

Belongs to the enolase family. It depends on Mg(2+) as a cofactor.

The protein localises to the cytoplasm. Its subcellular location is the secreted. It localises to the cell surface. It carries out the reaction (2R)-2-phosphoglycerate = phosphoenolpyruvate + H2O. Its pathway is carbohydrate degradation; glycolysis; pyruvate from D-glyceraldehyde 3-phosphate: step 4/5. Its function is as follows. Catalyzes the reversible conversion of 2-phosphoglycerate (2-PG) into phosphoenolpyruvate (PEP). It is essential for the degradation of carbohydrates via glycolysis. The chain is Enolase from Leptospira interrogans serogroup Icterohaemorrhagiae serovar copenhageni (strain Fiocruz L1-130).